The chain runs to 112 residues: Nucleoid-associated protein BCI_0116 (112 aa).

Belongs to the YbaB/EbfC family. As to quaternary structure, homodimer.

It localises to the cytoplasm. The protein localises to the nucleoid. Binds to DNA and alters its conformation. May be involved in regulation of gene expression, nucleoid organization and DNA protection. This chain is Nucleoid-associated protein BCI_0116, found in Baumannia cicadellinicola subsp. Homalodisca coagulata.